Here is a 538-residue protein sequence, read N- to C-terminus: Pyruvate kinase (538 aa).

S45 carries the post-translational modification Phosphoserine. Residue R72 participates in substrate binding. The K(+) site is built by N74, S76, D107, and T108. Position 74-77 (74-77 (NFSH)) interacts with ATP. ATP is bound by residues R114 and K200. E265 lines the Mg(2+) pocket. Residues G288, D289, and T321 each coordinate substrate. D289 contacts Mg(2+).

Belongs to the pyruvate kinase family. In terms of assembly, homotetramer. Mg(2+) serves as cofactor. Requires K(+) as cofactor.

It carries out the reaction pyruvate + ATP = phosphoenolpyruvate + ADP + H(+). Its pathway is carbohydrate degradation; glycolysis; pyruvate from D-glyceraldehyde 3-phosphate: step 5/5. This chain is Pyruvate kinase (pki1), found in Hypocrea jecorina (Trichoderma reesei).